The chain runs to 172 residues: MAKMQTKMQNEERDDGLREKMIAVNRVTKVVKGGRILGFAALTVVGDGDGRIGMGKGKSKEVPVAVQKAMDEARRKMIKVTLRKGTLQHTVTGQHGASRVLISPAKDGTGIIAGGPMRAIFDVMGVTNVVAKSLGSTNPYNLVRATIDGLSKMSTPAEIAAKRGKSVEEILG.

The region spanning 17 to 80 is the S5 DRBM domain; sequence LREKMIAVNR…DEARRKMIKV (64 aa).

This sequence belongs to the universal ribosomal protein uS5 family. Part of the 30S ribosomal subunit. Contacts proteins S4 and S8.

In terms of biological role, with S4 and S12 plays an important role in translational accuracy. Its function is as follows. Located at the back of the 30S subunit body where it stabilizes the conformation of the head with respect to the body. The polypeptide is Small ribosomal subunit protein uS5 (Polynucleobacter asymbioticus (strain DSM 18221 / CIP 109841 / QLW-P1DMWA-1) (Polynucleobacter necessarius subsp. asymbioticus)).